The chain runs to 176 residues: NAD(P)H-quinone oxidoreductase subunit 6, chloroplastic (176 aa).

A run of 5 helical transmembrane segments spans residues 10–30 (FLLVFLGSGLILGALGVVLFT), 33–53 (IFSAFSLGLVLVCISLFYILA), 63–83 (LLIYVGAINVLIIFSVMFMSG), 105–125 (ISLFVSLISTILNTSWYGIIW), and 152–172 (FFLPFELISIILLVSLIGAIA).

This sequence belongs to the complex I subunit 6 family. In terms of assembly, NDH is composed of at least 16 different subunits, 5 of which are encoded in the nucleus.

Its subcellular location is the plastid. It is found in the chloroplast thylakoid membrane. It catalyses the reaction a plastoquinone + NADH + (n+1) H(+)(in) = a plastoquinol + NAD(+) + n H(+)(out). The enzyme catalyses a plastoquinone + NADPH + (n+1) H(+)(in) = a plastoquinol + NADP(+) + n H(+)(out). NDH shuttles electrons from NAD(P)H:plastoquinone, via FMN and iron-sulfur (Fe-S) centers, to quinones in the photosynthetic chain and possibly in a chloroplast respiratory chain. The immediate electron acceptor for the enzyme in this species is believed to be plastoquinone. Couples the redox reaction to proton translocation, and thus conserves the redox energy in a proton gradient. This is NAD(P)H-quinone oxidoreductase subunit 6, chloroplastic (ndhG) from Spinacia oleracea (Spinach).